The sequence spans 715 residues: Fatty acid oxidation complex subunit alpha (715 aa).

An enoyl-CoA hydratase/isomerase region spans residues 1–190; the sequence is MIYEGKAITV…KVGAVDAVVA (190 aa). Residue Asp-297 participates in substrate binding. The segment at 312-715 is 3-hydroxyacyl-CoA dehydrogenase; the sequence is HDVKQAAVLG…MAKNGQRFFN (404 aa). Residues Met-325, Asp-344, 401–403, Lys-408, and Ser-430 contribute to the NAD(+) site; that span reads VVE. His-451 acts as the For 3-hydroxyacyl-CoA dehydrogenase activity in catalysis. Asn-454 lines the NAD(+) pocket. Substrate is bound by residues Asn-501 and Tyr-660.

This sequence in the N-terminal section; belongs to the enoyl-CoA hydratase/isomerase family. It in the C-terminal section; belongs to the 3-hydroxyacyl-CoA dehydrogenase family. As to quaternary structure, heterotetramer of two alpha chains (FadB) and two beta chains (FadA).

The enzyme catalyses a (3S)-3-hydroxyacyl-CoA + NAD(+) = a 3-oxoacyl-CoA + NADH + H(+). The catalysed reaction is a (3S)-3-hydroxyacyl-CoA = a (2E)-enoyl-CoA + H2O. It carries out the reaction a 4-saturated-(3S)-3-hydroxyacyl-CoA = a (3E)-enoyl-CoA + H2O. It catalyses the reaction (3S)-3-hydroxybutanoyl-CoA = (3R)-3-hydroxybutanoyl-CoA. The enzyme catalyses a (3Z)-enoyl-CoA = a 4-saturated (2E)-enoyl-CoA. The catalysed reaction is a (3E)-enoyl-CoA = a 4-saturated (2E)-enoyl-CoA. Its pathway is lipid metabolism; fatty acid beta-oxidation. Involved in the aerobic and anaerobic degradation of long-chain fatty acids via beta-oxidation cycle. Catalyzes the formation of 3-oxoacyl-CoA from enoyl-CoA via L-3-hydroxyacyl-CoA. It can also use D-3-hydroxyacyl-CoA and cis-3-enoyl-CoA as substrate. The chain is Fatty acid oxidation complex subunit alpha from Pseudomonas putida (strain ATCC 47054 / DSM 6125 / CFBP 8728 / NCIMB 11950 / KT2440).